The following is an 817-amino-acid chain: Putative receptor protein kinase ZmPK1 (817 aa).

Positions 1-28 (MPRPLAALLSTACILSFFIALFPRAASS) are cleaved as a signal peptide. Residues 29 to 158 (RDILPLGSSL…GGNTVWQSFD (130 aa)) form the Bulb-type lectin domain. Residues 29 to 472 (RDILPLGSSL…HKTGGGESKW (444 aa)) are Extracellular-facing. N-linked (GlcNAc...) asparagine glycosylation is found at Asn-83, Asn-128, Asn-228, and Asn-279. The EGF-like domain maps to 292–328 (MTQPCNIHGLCGPNGICHYSPTPTCSCPPGYATRNPG). 2 cysteine pairs are disulfide-bonded: Cys-296–Cys-308 and Cys-302–Cys-316. N-linked (GlcNAc...) asparagine glycans are attached at residues Asn-329 and Asn-339. The 83-residue stretch at 342–424 (CDRYDKRSMR…VRTIYLKLPT (83 aa)) folds into the PAN domain. Cystine bridges form between Cys-376–Cys-398 and Cys-384–Cys-386. Residue Asn-452 is glycosylated (N-linked (GlcNAc...) asparagine). The chain crosses the membrane as a helical span at residues 473 to 498 (FYFYGFIAAFFVVEVSFISFAWFFVL). The Cytoplasmic portion of the chain corresponds to 499–817 (KRELRPSELW…AVQTLLSADD (319 aa)). The Protein kinase domain maps to 534–817 (RKFKVELGRG…AVQTLLSADD (284 aa)). Residues 540-548 (LGRGESGTV) and Lys-562 each bind ATP. Catalysis depends on Asp-658, which acts as the Proton acceptor.

The protein belongs to the protein kinase superfamily. Ser/Thr protein kinase family. As to expression, expressed predominantly in the shoots and roots of young maize seedlings, and to a lesser extent in the silks.

Its subcellular location is the membrane. It carries out the reaction L-seryl-[protein] + ATP = O-phospho-L-seryl-[protein] + ADP + H(+). The catalysed reaction is L-threonyl-[protein] + ATP = O-phospho-L-threonyl-[protein] + ADP + H(+). In terms of biological role, probable receptor. Interaction with a ligand in the extracellular domain triggers the protein kinase activity of the cytoplasmic domain. This chain is Putative receptor protein kinase ZmPK1 (PK1), found in Zea mays (Maize).